We begin with the raw amino-acid sequence, 784 residues long: Toll-like receptor 2 (784 aa).

The N-terminal stretch at Met1 to Ser18 is a signal peptide. Topologically, residues Lys19–Arg587 are extracellular. Cys30 and Cys36 are disulfide-bonded. LRR repeat units lie at residues Val54 to Asn77, Leu78 to Arg101, Leu102 to Ser125, Leu126 to Lys150, Leu151 to Phe175, Leu176 to Asn199, Val200 to Ser223, Val224 to Leu250, Ile251 to Gly278, Leu279 to Lys308, Val309 to Arg337, Val338 to Ser361, Leu362 to Ser388, Leu389 to Asn414, Leu415 to Lys437, Met438 to Lys457, Thr458 to Gln478, Leu479 to Met500, and Leu501 to Thr524. Asn114 carries an N-linked (GlcNAc...) asparagine glycan. A glycan (N-linked (GlcNAc...) asparagine) is linked at Asn199. An intrachain disulfide couples Cys353 to Cys382. An N-linked (GlcNAc...) asparagine glycan is attached at Asn414. Cys432 and Cys454 are joined by a disulfide. Asn442 is a glycosylation site (N-linked (GlcNAc...) asparagine). The LRRCT domain occupies Leu525–Arg579. A helical transmembrane segment spans residues Ala588–Leu608. The Cytoplasmic segment spans residues Cys609–Ser784. The TIR domain maps to Ile639 to Ile782. A Glycyl lysine isopeptide (Lys-Gly) (interchain with G-Cter in ubiquitin) cross-link involves residue Lys754. The short motif at Tyr761–Leu778 is the ATG16L1-binding motif element.

It belongs to the Toll-like receptor family. As to quaternary structure, interacts with LY96, TLR1 and TLR6 (via extracellular domain). TLR2 seems to exist in heterodimers with either TLR1 or TLR6 before stimulation by the ligand. The heterodimers form bigger oligomers in response to their corresponding ligands as well as further heterotypic associations with other receptors such as CD14 and/or CD36. Binds MYD88 (via TIR domain). Interacts with TICAM1. Interacts with CNPY3. Interacts with ATG16L1. Interacts with PPP1R11. Interacts with TICAM2. Interacts with TIRAP. Post-translationally, ubiquitinated at Lys-754 by PPP1R11, leading to its degradation. Deubiquitinated by USP2. In terms of processing, glycosylation of Asn-442 is critical for secretion of the N-terminal ectodomain of TLR2.

It localises to the membrane. The protein localises to the cytoplasmic vesicle. The protein resides in the phagosome membrane. Its subcellular location is the membrane raft. Functionally, cooperates with LY96 to mediate the innate immune response to bacterial lipoproteins and other microbial cell wall components. Cooperates with TLR1 or TLR6 to mediate the innate immune response to bacterial lipoproteins or lipopeptides. Acts via MYD88 and TRAF6, leading to NF-kappa-B activation, cytokine secretion and the inflammatory response. May also promote apoptosis in response to lipoproteins. Forms activation clusters composed of several receptors depending on the ligand, these clusters trigger signaling from the cell surface and subsequently are targeted to the Golgi in a lipid-raft dependent pathway. Forms the cluster TLR2:TLR6:CD14:CD36 in response to diacylated lipopeptides and TLR2:TLR1:CD14 in response to triacylated lipopeptides. The polypeptide is Toll-like receptor 2 (TLR2) (Macaca fascicularis (Crab-eating macaque)).